Reading from the N-terminus, the 406-residue chain is 4-hydroxy-3-methylbut-2-en-1-yl diphosphate synthase (flavodoxin) (406 aa).

4 residues coordinate [4Fe-4S] cluster: Cys297, Cys300, Cys343, and Glu350.

The protein belongs to the IspG family. Requires [4Fe-4S] cluster as cofactor.

It carries out the reaction (2E)-4-hydroxy-3-methylbut-2-enyl diphosphate + oxidized [flavodoxin] + H2O + 2 H(+) = 2-C-methyl-D-erythritol 2,4-cyclic diphosphate + reduced [flavodoxin]. It participates in isoprenoid biosynthesis; isopentenyl diphosphate biosynthesis via DXP pathway; isopentenyl diphosphate from 1-deoxy-D-xylulose 5-phosphate: step 5/6. Functionally, converts 2C-methyl-D-erythritol 2,4-cyclodiphosphate (ME-2,4cPP) into 1-hydroxy-2-methyl-2-(E)-butenyl 4-diphosphate. The polypeptide is 4-hydroxy-3-methylbut-2-en-1-yl diphosphate synthase (flavodoxin) (Thermus thermophilus (strain ATCC 27634 / DSM 579 / HB8)).